Here is a 327-residue protein sequence, read N- to C-terminus: Phosphate acyltransferase (327 aa).

It belongs to the PlsX family. In terms of assembly, homodimer. Probably interacts with PlsY.

The protein localises to the cytoplasm. It catalyses the reaction a fatty acyl-[ACP] + phosphate = an acyl phosphate + holo-[ACP]. It functions in the pathway lipid metabolism; phospholipid metabolism. In terms of biological role, catalyzes the reversible formation of acyl-phosphate (acyl-PO(4)) from acyl-[acyl-carrier-protein] (acyl-ACP). This enzyme utilizes acyl-ACP as fatty acyl donor, but not acyl-CoA. The sequence is that of Phosphate acyltransferase from Thermotoga neapolitana (strain ATCC 49049 / DSM 4359 / NBRC 107923 / NS-E).